The sequence spans 239 residues: Phosphoribosylaminoimidazole-succinocarboxamide synthase (239 aa).

Belongs to the SAICAR synthetase family.

It carries out the reaction 5-amino-1-(5-phospho-D-ribosyl)imidazole-4-carboxylate + L-aspartate + ATP = (2S)-2-[5-amino-1-(5-phospho-beta-D-ribosyl)imidazole-4-carboxamido]succinate + ADP + phosphate + 2 H(+). Its pathway is purine metabolism; IMP biosynthesis via de novo pathway; 5-amino-1-(5-phospho-D-ribosyl)imidazole-4-carboxamide from 5-amino-1-(5-phospho-D-ribosyl)imidazole-4-carboxylate: step 1/2. The polypeptide is Phosphoribosylaminoimidazole-succinocarboxamide synthase (Bacillus cereus (strain AH187)).